A 282-amino-acid chain; its full sequence is Bis(5'-nucleosyl)-tetraphosphatase, symmetrical (282 aa).

This sequence belongs to the Ap4A hydrolase family.

It carries out the reaction P(1),P(4)-bis(5'-adenosyl) tetraphosphate + H2O = 2 ADP + 2 H(+). Functionally, hydrolyzes diadenosine 5',5'''-P1,P4-tetraphosphate to yield ADP. The protein is Bis(5'-nucleosyl)-tetraphosphatase, symmetrical of Enterobacter sp. (strain 638).